The chain runs to 440 residues: Endoplasmic reticulum junction formation protein lunapark (440 aa).

Residues 1-45 (MGALLAKWRAKPSTVEVLEKMEKDIQSLEEFRDKNQKLRKIWVAR) are Cytoplasmic-facing. The stretch at 16–40 (EVLEKMEKDIQSLEEFRDKNQKLRK) forms a coiled coil. The helical transmembrane segment at 46-66 (LFFYSTILYILTSLTVYLWYL) threads the bilayer. At 67 to 77 (PGGMTARLLTT) the chain is on the lumenal side. The chain crosses the membrane as a helical span at residues 78–98 (LLFLLFPVLIWFVRTLLILWF). Topologically, residues 99-440 (SRRTERNNDA…ESEESFMETE (342 aa)) are cytoplasmic. Positions 100–128 (RRTERNNDALELLKAEKKKILEEVMEKET) form a coiled coil. The segment at 149 to 169 (LELPVPGPPITPRPGQDLRQR) is disordered. Phosphothreonine is present on threonine 159. Serine 177, serine 179, serine 188, and serine 192 each carry phosphoserine. Threonine 198 bears the Phosphothreonine mark. The segment at 202 to 247 (QRDTSAPGGPPERSVQPTPQSNILQRRPGSPATAVSGMALHPPGPP) is disordered. A phosphoserine mark is found at serine 206 and serine 215. Positions 216 to 225 (VQPTPQSNIL) are enriched in polar residues. Threonine 219 carries the phosphothreonine modification. Phosphoserine occurs at positions 222 and 231. Residues 280–305 (CQQCFSHNGMALKEEFEYVAFRCAYC) form a C4-type; plays a role in ER morphology zinc finger. Positions 316–440 (PQAPRLQEIS…ESEESFMETE (125 aa)) are disordered. Residue serine 325 is modified to Phosphoserine. Positions 334-343 (DSQGSVNTLQ) are enriched in polar residues. Composition is skewed to acidic residues over residues 370–411 (QAIE…DDTE) and 431–440 (ESEESFMETE).

The protein belongs to the lunapark family. As to quaternary structure, homodimer; homodimerization requires the C4-type zinc finger motif and decreases during mitosis in a phosphorylation-dependent manner. Post-translationally, phosphorylated. Phosphorylation at Thr-159 and Ser-325 occurs during interphase. Phosphorylation at Ser-177, Ser-179, Ser-188, Ser-192, Thr-198, Ser-206, Ser-215, Thr-219, Ser-222 and Ser-231 occurs during mitosis; these phosphorylations reduce both its homodimerization and the ER three-way tubular junction formation.

Its subcellular location is the endoplasmic reticulum membrane. Endoplasmic reticulum (ER)-shaping membrane protein that plays a role in determining ER morphology. Involved in the stabilization of nascent three-way ER tubular junctions within the ER network. May also play a role as a curvature-stabilizing protein within three-way ER tubular junction network. This Xenopus laevis (African clawed frog) protein is Endoplasmic reticulum junction formation protein lunapark (lnpk).